A 331-amino-acid chain; its full sequence is Neurogenic differentiation factor 4 (331 aa).

The disordered stretch occupies residues 1 to 80 (MSKTFVKSKE…GPKKKKMTKA (80 aa)). Residues 52–64 (DSIEEEEEEEEDG) are compositionally biased toward acidic residues. A compositionally biased stretch (basic residues) spans 67-79 (PKRRGPKKKKMTK). The bHLH domain maps to 87–139 (ARRVKANARERTRMHGLNDALDNLRRVMPCYSKTQKLSKIETLRLARNYIWAL). The tract at residues 246 to 265 (TPPYEGPLTPPLSISGNFSL) is disordered.

Efficient DNA binding requires dimerization with another bHLH protein. In terms of processing, serine or threonine phosphorylation within the basic region may regulate neurogenic activity.

Its subcellular location is the nucleus. In terms of biological role, probably acts as a transcriptional activator. Mediates neuronal differentiation. Required for the regulation of amacrine cell fate specification in the retina. The polypeptide is Neurogenic differentiation factor 4 (NEUROD4) (Homo sapiens (Human)).